The primary structure comprises 143 residues: MFLGTYTPRLDDKGRLTLPAKFRDDLAGGLMVTKGQDHSLAVYPKEEFTALARRAAAASRSNPQARAFVRALAAGTDEQRPDAQGRITLSADHRRYANLSRDCVVIGSVDFLEIWDKQAWESYLAEHEEDYAQARDESLGGIF.

SpoVT-AbrB domains are found at residues 5-47 (TYTP…PKEE) and 76-119 (TDEQ…DKQA).

It belongs to the MraZ family. Forms oligomers.

It is found in the cytoplasm. The protein localises to the nucleoid. The sequence is that of Transcriptional regulator MraZ from Nocardia farcinica (strain IFM 10152).